Consider the following 291-residue polypeptide: Ribosomal RNA small subunit methyltransferase H (291 aa).

S-adenosyl-L-methionine is bound by residues 36 to 38, D55, L88, D102, and Q109; that span reads GGH. Residues 268–291 are disordered; the sequence is KPTQEETKNNPRARSAKLRVAERI.

The protein belongs to the methyltransferase superfamily. RsmH family.

Its subcellular location is the cytoplasm. It carries out the reaction cytidine(1402) in 16S rRNA + S-adenosyl-L-methionine = N(4)-methylcytidine(1402) in 16S rRNA + S-adenosyl-L-homocysteine + H(+). Specifically methylates the N4 position of cytidine in position 1402 (C1402) of 16S rRNA. This chain is Ribosomal RNA small subunit methyltransferase H, found in Thermosipho melanesiensis (strain DSM 12029 / CIP 104789 / BI429).